The primary structure comprises 93 residues: UPF0473 protein BH1270 (93 aa).

This sequence belongs to the UPF0473 family.

The sequence is that of UPF0473 protein BH1270 from Halalkalibacterium halodurans (strain ATCC BAA-125 / DSM 18197 / FERM 7344 / JCM 9153 / C-125) (Bacillus halodurans).